Here is a 350-residue protein sequence, read N- to C-terminus: 3-isopropylmalate dehydrogenase (350 aa).

Position 76–87 (76–87 (GPKWDNAPKRPE)) interacts with NAD(+). Residues Arg94, Arg104, Arg132, and Asp217 each contribute to the substrate site. Mg(2+) is bound by residues Asp217, Asp241, and Asp245. Position 275–287 (275–287 (GSAPDIANQNIAN)) interacts with NAD(+).

Belongs to the isocitrate and isopropylmalate dehydrogenases family. LeuB type 1 subfamily. In terms of assembly, homodimer. It depends on Mg(2+) as a cofactor. Mn(2+) serves as cofactor.

It is found in the cytoplasm. It carries out the reaction (2R,3S)-3-isopropylmalate + NAD(+) = 4-methyl-2-oxopentanoate + CO2 + NADH. It functions in the pathway amino-acid biosynthesis; L-leucine biosynthesis; L-leucine from 3-methyl-2-oxobutanoate: step 3/4. In terms of biological role, catalyzes the oxidation of 3-carboxy-2-hydroxy-4-methylpentanoate (3-isopropylmalate) to 3-carboxy-4-methyl-2-oxopentanoate. The product decarboxylates to 4-methyl-2 oxopentanoate. This is 3-isopropylmalate dehydrogenase from Listeria monocytogenes serotype 4b (strain F2365).